A 372-amino-acid chain; its full sequence is tRNA-specific 2-thiouridylase MnmA (372 aa).

ATP-binding positions include 11-18 and Met-37; that span reads GMSGGVDS. An interaction with target base in tRNA region spans residues 97–99; that stretch reads NPD. Cys-102 functions as the Nucleophile in the catalytic mechanism. Cys-102 and Cys-199 are joined by a disulfide. ATP is bound at residue Gly-126. Residues 149–151 form an interaction with tRNA region; it reads KDQ. Cys-199 acts as the Cysteine persulfide intermediate in catalysis. An interaction with tRNA region spans residues 309 to 310; sequence RY.

The protein belongs to the MnmA/TRMU family.

It is found in the cytoplasm. It carries out the reaction S-sulfanyl-L-cysteinyl-[protein] + uridine(34) in tRNA + AH2 + ATP = 2-thiouridine(34) in tRNA + L-cysteinyl-[protein] + A + AMP + diphosphate + H(+). Functionally, catalyzes the 2-thiolation of uridine at the wobble position (U34) of tRNA, leading to the formation of s(2)U34. This is tRNA-specific 2-thiouridylase MnmA from Staphylococcus aureus (strain Mu50 / ATCC 700699).